An 82-amino-acid chain; its full sequence is Acyl carrier protein (82 aa).

In terms of domain architecture, Carrier spans Asp-2 to Ile-77. Ser-37 is subject to O-(pantetheine 4'-phosphoryl)serine.

This sequence belongs to the acyl carrier protein (ACP) family. 4'-phosphopantetheine is transferred from CoA to a specific serine of apo-ACP by AcpS. This modification is essential for activity because fatty acids are bound in thioester linkage to the sulfhydryl of the prosthetic group.

The protein resides in the cytoplasm. The protein operates within lipid metabolism; fatty acid biosynthesis. Carrier of the growing fatty acid chain in fatty acid biosynthesis. This is Acyl carrier protein from Acidithiobacillus ferrooxidans (strain ATCC 23270 / DSM 14882 / CIP 104768 / NCIMB 8455) (Ferrobacillus ferrooxidans (strain ATCC 23270)).